Consider the following 418-residue polypeptide: Actin-related protein 3 (418 aa).

At Ala2 the chain carries N-acetylalanine. N6-acetyllysine is present on residues Lys240, Lys244, Lys251, and Lys254.

The protein belongs to the actin family. ARP3 subfamily. In terms of assembly, component of the Arp2/3 complex composed of ACTR2/ARP2, ACTR3/ARP3, ARPC1B/p41-ARC, ARPC2/p34-ARC, ARPC3/p21-ARC, ARPC4/p20-ARC and ARPC5/p16-ARC. Interacts with WHDC1. Interacts weakly with MEFV. Interacts with AVIL. (Microbial infection) Interacts with bacterium B.thailandensis BimA.

It is found in the cytoplasm. Its subcellular location is the cytoskeleton. It localises to the cell projection. The protein resides in the nucleus. Functionally, ATP-binding component of the Arp2/3 complex, a multiprotein complex that mediates actin polymerization upon stimulation by nucleation-promoting factor (NPF). The Arp2/3 complex mediates the formation of branched actin networks in the cytoplasm, providing the force for cell motility. Seems to contact the pointed end of the daughter actin filament. In podocytes, required for the formation of lamellipodia downstream of AVIL and PLCE1 regulation. In addition to its role in the cytoplasmic cytoskeleton, the Arp2/3 complex also promotes actin polymerization in the nucleus, thereby regulating gene transcription and repair of damaged DNA. The Arp2/3 complex promotes homologous recombination (HR) repair in response to DNA damage by promoting nuclear actin polymerization, leading to drive motility of double-strand breaks (DSBs). Plays a role in ciliogenesis. This chain is Actin-related protein 3 (Actr3), found in Mus musculus (Mouse).